A 766-amino-acid polypeptide reads, in one-letter code: FYVE, RhoGEF and PH domain-containing protein 4 (766 aa).

The segment at 1–150 (MEESNPAPTS…SSVTNSHDEN (150 aa)) is actin filament-binding. Polar residues-rich tracts occupy residues 43-65 (STMNLNIPQTPRQHGLTSTTPQK), 132-145 (RNETTTDSASSVTN), and 152-161 (CDSSCRTQGT). A disordered region spans residues 43 to 167 (STMNLNIPQT…TQGTDLGLPS (125 aa)). One can recognise a DH domain in the interval 206 to 393 (KLHKIATELL…STAASHSNSA (188 aa)). A PH 1 domain is found at 422–521 (ELIKEGQILK…WIKALQESID (100 aa)). An FYVE-type zinc finger spans residues 559-619 (DNEVTMCMKC…VCKDCYQIMS (61 aa)). Zn(2+) is bound by residues Cys-565, Cys-568, Cys-582, Cys-585, Cys-590, Cys-593, Cys-611, and Cys-614. The PH 2 domain occupies 643–740 (NSEVCSFLQY…WLKIILLAVT (98 aa)). Phosphoserine is present on residues Ser-702 and Ser-716. The disordered stretch occupies residues 745-766 (DGPSEHLDTLDNLPGPKEKSEC).

As to quaternary structure, homooligomer. In terms of tissue distribution, detected in brain, lung, liver, skeletal muscle, kidney, testis and cultured hippocampal neurons.

Its subcellular location is the cytoplasm. It is found in the cytoskeleton. It localises to the cell projection. The protein localises to the filopodium. Its function is as follows. Activates CDC42, a member of the Ras-like family of Rho- and Rac proteins, by exchanging bound GDP for free GTP. Plays a role in regulating the actin cytoskeleton and cell shape. Activates MAPK8. The protein is FYVE, RhoGEF and PH domain-containing protein 4 (Fgd4) of Rattus norvegicus (Rat).